The primary structure comprises 142 residues: Large ribosomal subunit protein uL11 (142 aa).

Belongs to the universal ribosomal protein uL11 family. In terms of assembly, part of the ribosomal stalk of the 50S ribosomal subunit. Interacts with L10 and the large rRNA to form the base of the stalk. L10 forms an elongated spine to which L12 dimers bind in a sequential fashion forming a multimeric L10(L12)X complex. One or more lysine residues are methylated.

Functionally, forms part of the ribosomal stalk which helps the ribosome interact with GTP-bound translation factors. The polypeptide is Large ribosomal subunit protein uL11 (Photorhabdus laumondii subsp. laumondii (strain DSM 15139 / CIP 105565 / TT01) (Photorhabdus luminescens subsp. laumondii)).